Reading from the N-terminus, the 432-residue chain is uncharacterized protein (432 aa).

Helical transmembrane passes span 35–55 (VARV…VIYL), 60–80 (LPPA…IATG), 112–132 (VAGM…PLWS), 144–164 (VGLL…LGAL), 185–205 (LAVA…LWAA), 209–229 (AVAW…ASLL), 242–262 (AHSI…PVLL), 274–294 (GAVI…LSAM), 313–333 (LIAP…AAGL), 359–379 (AAAV…AAAL), 384–404 (LLGW…PMPL), and 408–428 (TVIA…AALA).

The protein to M.tuberculosis Rv3630 and M.bovis Mb3654.

The protein localises to the cell membrane. This is an uncharacterized protein from Mycobacterium tuberculosis (strain CDC 1551 / Oshkosh).